The chain runs to 711 residues: Polyribonucleotide nucleotidyltransferase (711 aa).

Mg(2+) is bound by residues D489 and D495. The KH domain occupies P556–I615. The 69-residue stretch at G625–K693 folds into the S1 motif domain.

It belongs to the polyribonucleotide nucleotidyltransferase family. In terms of assembly, component of the RNA degradosome, which is a multiprotein complex involved in RNA processing and mRNA degradation. It depends on Mg(2+) as a cofactor.

The protein resides in the cytoplasm. The catalysed reaction is RNA(n+1) + phosphate = RNA(n) + a ribonucleoside 5'-diphosphate. Its function is as follows. Involved in mRNA degradation. Catalyzes the phosphorolysis of single-stranded polyribonucleotides processively in the 3'- to 5'-direction. This is Polyribonucleotide nucleotidyltransferase from Cronobacter sakazakii (strain ATCC BAA-894) (Enterobacter sakazakii).